A 378-amino-acid chain; its full sequence is Ribosomal RNA large subunit methyltransferase G (378 aa).

This sequence belongs to the methyltransferase superfamily. RlmG family.

Its subcellular location is the cytoplasm. The catalysed reaction is guanosine(1835) in 23S rRNA + S-adenosyl-L-methionine = N(2)-methylguanosine(1835) in 23S rRNA + S-adenosyl-L-homocysteine + H(+). Its function is as follows. Specifically methylates the guanine in position 1835 (m2G1835) of 23S rRNA. The chain is Ribosomal RNA large subunit methyltransferase G from Shigella flexneri serotype 5b (strain 8401).